Reading from the N-terminus, the 461-residue chain is Photosystem II CP43 reaction center protein (461 aa).

A propeptide spanning residues 1-2 is cleaved from the precursor; that stretch reads ME. Thr-3 bears the N-acetylthreonine mark. Thr-3 is modified (phosphothreonine). 5 consecutive transmembrane segments (helical) span residues 57 to 81, 122 to 143, 166 to 188, 243 to 263, and 279 to 300; these read LFEVAHFVPEKPMYEQGLILLPHLA, LLGPETLEESFPFFGYVWKDRN, KALYFGGVYDTWAPGGGDVRKIT, KPFAWARRALVWSGEAYLSYS, and WFNNTAYPSEFYGPTGPEASQA. Residue Glu-355 coordinates [CaMn4O5] cluster. A helical membrane pass occupies residues 435–459; that stretch reads RARAAAAGFEKGIDRDFEPVLSMTP.

The protein belongs to the PsbB/PsbC family. PsbC subfamily. In terms of assembly, PSII is composed of 1 copy each of membrane proteins PsbA, PsbB, PsbC, PsbD, PsbE, PsbF, PsbH, PsbI, PsbJ, PsbK, PsbL, PsbM, PsbT, PsbX, PsbY, PsbZ, Psb30/Ycf12, at least 3 peripheral proteins of the oxygen-evolving complex and a large number of cofactors. It forms dimeric complexes. Binds multiple chlorophylls and provides some of the ligands for the Ca-4Mn-5O cluster of the oxygen-evolving complex. It may also provide a ligand for a Cl- that is required for oxygen evolution. PSII binds additional chlorophylls, carotenoids and specific lipids. is required as a cofactor.

The protein localises to the plastid. It is found in the chloroplast thylakoid membrane. In terms of biological role, one of the components of the core complex of photosystem II (PSII). It binds chlorophyll and helps catalyze the primary light-induced photochemical processes of PSII. PSII is a light-driven water:plastoquinone oxidoreductase, using light energy to abstract electrons from H(2)O, generating O(2) and a proton gradient subsequently used for ATP formation. The sequence is that of Photosystem II CP43 reaction center protein from Gossypium barbadense (Sea Island cotton).